The primary structure comprises 402 residues: Mannonate dehydratase (402 aa).

This sequence belongs to the mannonate dehydratase family. Fe(2+) is required as a cofactor. The cofactor is Mn(2+).

It carries out the reaction D-mannonate = 2-dehydro-3-deoxy-D-gluconate + H2O. The protein operates within carbohydrate metabolism; pentose and glucuronate interconversion. In terms of biological role, catalyzes the dehydration of D-mannonate. The sequence is that of Mannonate dehydratase from Rhizobium meliloti (strain 1021) (Ensifer meliloti).